A 599-amino-acid chain; its full sequence is Elongation factor 4 (599 aa).

The 183-residue stretch at 5–187 (NHIRNFSIIA…QIVQLVPPPE (183 aa)) folds into the tr-type G domain. Residues 17–22 (DHGKST) and 134–137 (NKMD) each bind GTP.

Belongs to the TRAFAC class translation factor GTPase superfamily. Classic translation factor GTPase family. LepA subfamily.

Its subcellular location is the cell inner membrane. It carries out the reaction GTP + H2O = GDP + phosphate + H(+). Its function is as follows. Required for accurate and efficient protein synthesis under certain stress conditions. May act as a fidelity factor of the translation reaction, by catalyzing a one-codon backward translocation of tRNAs on improperly translocated ribosomes. Back-translocation proceeds from a post-translocation (POST) complex to a pre-translocation (PRE) complex, thus giving elongation factor G a second chance to translocate the tRNAs correctly. Binds to ribosomes in a GTP-dependent manner. This is Elongation factor 4 from Hahella chejuensis (strain KCTC 2396).